The following is a 447-amino-acid chain: M-phase inducer phosphatase 3 (447 aa).

Residue Ser2 is modified to N-acetylserine. Phosphoserine occurs at positions 20, 38, 56, 60, and 63. Thr66 is subject to Phosphothreonine; by CDK1. Residues 81 to 90 (MSASPLTTSA) show a composition bias toward polar residues. Residues 81-109 (MSASPLTTSADLEDNGSLDSSGPLDRQLT) are disordered. Ser128 is subject to Phosphoserine. Thr129 bears the Phosphothreonine mark. The residue at position 192 (Ser192) is a Phosphoserine; by CDK1. Phosphoserine; by PLK3 occurs at positions 213 and 220. In terms of domain architecture, Rhodanese spans 294 to 401 (VIERFYIIDC…FFPEYMELCD (108 aa)). Residue Cys350 is part of the active site. Phosphoserine is present on Ser445.

The protein belongs to the MPI phosphatase family. In terms of assembly, interacts with MAPK14 and 14-3-3 proteins. When phosphorylated on Ser-128 and/or Thr-129, interacts with PLK1. Interacts with MARK3/C-TAK1. Phosphorylated by PLK4. Phosphorylated by PLK1, leading to activate the phosphatase activity. Phosphorylated by CHEK1 and MAPKAPK2. This phosphorylation creates a binding site for 14-3-3 protein and inhibits the phosphatase activity. Phosphorylation by PLK3 at Ser-213 promotes nuclear translocation. Ser-220 is a minor phosphorylation site. Phosphorylation by CDK1 occurs at G2 and G2-M transition and leads to increased activity. In terms of tissue distribution, spleen and thymus.

It is found in the nucleus. The enzyme catalyses O-phospho-L-tyrosyl-[protein] + H2O = L-tyrosyl-[protein] + phosphate. Its function is as follows. Functions as a dosage-dependent inducer in mitotic control. Tyrosine protein phosphatase required for progression of the cell cycle. When phosphorylated, highly effective in activating G2 cells into prophase. Directly dephosphorylates CDK1 and activates its kinase activity. This chain is M-phase inducer phosphatase 3 (Cdc25c), found in Mus musculus (Mouse).